Here is a 1370-residue protein sequence, read N- to C-terminus: DNA-directed RNA polymerase subunit beta (1370 aa).

Belongs to the RNA polymerase beta chain family. The RNAP catalytic core consists of 2 alpha, 1 beta, 1 beta' and 1 omega subunit. When a sigma factor is associated with the core the holoenzyme is formed, which can initiate transcription.

It carries out the reaction RNA(n) + a ribonucleoside 5'-triphosphate = RNA(n+1) + diphosphate. DNA-dependent RNA polymerase catalyzes the transcription of DNA into RNA using the four ribonucleoside triphosphates as substrates. This Bordetella petrii (strain ATCC BAA-461 / DSM 12804 / CCUG 43448) protein is DNA-directed RNA polymerase subunit beta.